Here is a 464-residue protein sequence, read N- to C-terminus: Soluble pyridine nucleotide transhydrogenase (464 aa).

Residue 35-44 participates in FAD binding; the sequence is DSRRQVGGNC.

Belongs to the class-I pyridine nucleotide-disulfide oxidoreductase family. It depends on FAD as a cofactor.

It is found in the cytoplasm. It catalyses the reaction NAD(+) + NADPH = NADH + NADP(+). In terms of biological role, conversion of NADPH, generated by peripheral catabolic pathways, to NADH, which can enter the respiratory chain for energy generation. This chain is Soluble pyridine nucleotide transhydrogenase, found in Pseudomonas fluorescens (strain SBW25).